We begin with the raw amino-acid sequence, 146 residues long: Large ribosomal subunit protein uL15 (146 aa).

The disordered stretch occupies residues 1–54; that stretch reads MKLHELRPAAGSKSAPKRVGRGTGSGLGRNAGKGEKGQNARSGGGVRPGFEGGQ. Gly residues-rich tracts occupy residues 21 to 31 and 42 to 52; these read RGTGSGLGRNA and SGGGVRPGFEG.

The protein belongs to the universal ribosomal protein uL15 family. As to quaternary structure, part of the 50S ribosomal subunit.

Its function is as follows. Binds to the 23S rRNA. The protein is Large ribosomal subunit protein uL15 of Clostridium perfringens (strain ATCC 13124 / DSM 756 / JCM 1290 / NCIMB 6125 / NCTC 8237 / Type A).